We begin with the raw amino-acid sequence, 160 residues long: Ribosome-binding factor A (160 aa).

The segment covering lysine 112–glutamate 122 has biased composition (basic and acidic residues). The disordered stretch occupies residues lysine 112–lysine 160. Residues glutamate 141 to lysine 160 show a composition bias toward acidic residues.

The protein belongs to the RbfA family. As to quaternary structure, monomer. Binds 30S ribosomal subunits, but not 50S ribosomal subunits or 70S ribosomes.

The protein localises to the cytoplasm. Functionally, one of several proteins that assist in the late maturation steps of the functional core of the 30S ribosomal subunit. Associates with free 30S ribosomal subunits (but not with 30S subunits that are part of 70S ribosomes or polysomes). Required for efficient processing of 16S rRNA. May interact with the 5'-terminal helix region of 16S rRNA. This chain is Ribosome-binding factor A, found in Streptomyces coelicolor (strain ATCC BAA-471 / A3(2) / M145).